We begin with the raw amino-acid sequence, 264 residues long: Pyridoxine 5'-phosphate synthase (264 aa).

Positions 1–21 (MTDTAQILPTTLEQNPQNTSK) are enriched in polar residues. Residues 1–22 (MTDTAQILPTTLEQNPQNTSKK) are disordered. Asparagine 28 contacts 3-amino-2-oxopropyl phosphate. 30–31 (DH) lines the 1-deoxy-D-xylulose 5-phosphate pocket. Arginine 39 serves as a coordination point for 3-amino-2-oxopropyl phosphate. Histidine 64 functions as the Proton acceptor in the catalytic mechanism. The 1-deoxy-D-xylulose 5-phosphate site is built by arginine 66 and histidine 71. The active-site Proton acceptor is glutamate 91. Threonine 121 contributes to the 1-deoxy-D-xylulose 5-phosphate binding site. The active-site Proton donor is the histidine 217. 3-amino-2-oxopropyl phosphate-binding positions include glycine 218 and 239–240 (GH).

It belongs to the PNP synthase family. As to quaternary structure, homooctamer; tetramer of dimers.

It is found in the cytoplasm. The catalysed reaction is 3-amino-2-oxopropyl phosphate + 1-deoxy-D-xylulose 5-phosphate = pyridoxine 5'-phosphate + phosphate + 2 H2O + H(+). Its pathway is cofactor biosynthesis; pyridoxine 5'-phosphate biosynthesis; pyridoxine 5'-phosphate from D-erythrose 4-phosphate: step 5/5. In terms of biological role, catalyzes the complicated ring closure reaction between the two acyclic compounds 1-deoxy-D-xylulose-5-phosphate (DXP) and 3-amino-2-oxopropyl phosphate (1-amino-acetone-3-phosphate or AAP) to form pyridoxine 5'-phosphate (PNP) and inorganic phosphate. In Psychrobacter cryohalolentis (strain ATCC BAA-1226 / DSM 17306 / VKM B-2378 / K5), this protein is Pyridoxine 5'-phosphate synthase.